Consider the following 450-residue polypeptide: ATP-dependent protease ATPase subunit HslU (450 aa).

Residues Val-29, 71 to 76 (GVGKTE), Asp-261, Glu-328, and Arg-400 contribute to the ATP site.

Belongs to the ClpX chaperone family. HslU subfamily. As to quaternary structure, a double ring-shaped homohexamer of HslV is capped on each side by a ring-shaped HslU homohexamer. The assembly of the HslU/HslV complex is dependent on binding of ATP.

It is found in the cytoplasm. Functionally, ATPase subunit of a proteasome-like degradation complex; this subunit has chaperone activity. The binding of ATP and its subsequent hydrolysis by HslU are essential for unfolding of protein substrates subsequently hydrolyzed by HslV. HslU recognizes the N-terminal part of its protein substrates and unfolds these before they are guided to HslV for hydrolysis. This chain is ATP-dependent protease ATPase subunit HslU, found in Rickettsia rickettsii (strain Iowa).